The primary structure comprises 65 residues: Conotoxin Cal1.3 (65 aa).

An N-terminal signal peptide occupies residues 1-18 (MRCLPVFIILLLLASTAA). Positions 19–49 (VDVAGSKLKRRLERKPYQGSQAYVKKTAFGL) are excised as a propeptide. Disulfide bonds link Cys52–Cys62 and Cys53–Cys59. Pro61 carries the post-translational modification 4-hydroxyproline. Cys62 carries the post-translational modification Cysteine amide.

The protein belongs to the conotoxin T superfamily. In terms of tissue distribution, expressed by the venom duct.

The protein resides in the secreted. Its function is as follows. Probable neurotoxin with unknown target. Possibly targets ion channels. The polypeptide is Conotoxin Cal1.3 (Californiconus californicus (California cone)).